Consider the following 211-residue polypeptide: FMN-dependent NADH:quinone oxidoreductase (211 aa).

FMN contacts are provided by residues 17–19 (SNS), 102–105 (MWNL), and 146–149 (SRGG).

Belongs to the azoreductase type 1 family. As to quaternary structure, homodimer. FMN is required as a cofactor.

It catalyses the reaction 2 a quinone + NADH + H(+) = 2 a 1,4-benzosemiquinone + NAD(+). The catalysed reaction is N,N-dimethyl-1,4-phenylenediamine + anthranilate + 2 NAD(+) = 2-(4-dimethylaminophenyl)diazenylbenzoate + 2 NADH + 2 H(+). In terms of biological role, quinone reductase that provides resistance to thiol-specific stress caused by electrophilic quinones. Functionally, also exhibits azoreductase activity. Catalyzes the reductive cleavage of the azo bond in aromatic azo compounds to the corresponding amines. In Macrococcus caseolyticus (strain JCSC5402) (Macrococcoides caseolyticum), this protein is FMN-dependent NADH:quinone oxidoreductase.